A 522-amino-acid chain; its full sequence is Peptide chain release factor 3 (522 aa).

The tr-type G domain maps to 10-277 (ASRKTFAIIS…TFVDFAPAPS (268 aa)). GTP contacts are provided by residues 19-26 (SHPDAGKT), 87-91 (DTPGH), and 141-144 (NKMD).

The protein belongs to the TRAFAC class translation factor GTPase superfamily. Classic translation factor GTPase family. PrfC subfamily.

The protein localises to the cytoplasm. Its function is as follows. Increases the formation of ribosomal termination complexes and stimulates activities of RF-1 and RF-2. It binds guanine nucleotides and has strong preference for UGA stop codons. It may interact directly with the ribosome. The stimulation of RF-1 and RF-2 is significantly reduced by GTP and GDP, but not by GMP. The chain is Peptide chain release factor 3 from Listeria monocytogenes serovar 1/2a (strain ATCC BAA-679 / EGD-e).